The chain runs to 779 residues: Abnormal cell migration protein 10 (779 aa).

A compositionally biased stretch (acidic residues) spans 78–97; the sequence is NELEADTEEDIAETADDEES. 3 disordered regions span residues 78-105, 189-217, and 242-302; these read NELE…EKTE, SSSR…PQQP, and AASS…NAEE. Polar residues predominate over residues 189 to 200; that stretch reads SSSRENVKSIST. The segment covering 242–254 has biased composition (low complexity); the sequence is AASSCSSPDGDSA. Over residues 256-293 the composition is skewed to polar residues; the sequence is GDSSSTESSNNRCRNSAFSSNDSCRDSLNTPSPTQVSP. The Ras-associating domain occupies 317–407; that stretch reads EAKVTKIFVK…NKLYFMRRPD (91 aa). One can recognise a PH domain in the interval 456-566; sequence PPEMEGFLYL…WLVALRIAKN (111 aa). 2 stretches are compositionally biased toward polar residues: residues 645-660 and 688-698; these read SFSV…SRTS and RASTSSPTIPQ. Residues 645–763 form a disordered region; that stretch reads SFSVNSCQQS…SPMAPAKNDL (119 aa). The segment covering 708–729 has biased composition (pro residues); sequence PAPPPVASVMRMPPPVTPPKPC.

It belongs to the MRL family. In terms of assembly, may interact (via Ras-associating and PH domains) with ced-10 (GTP-bound form).

It localises to the perikaryon. Functionally, required cell non-autonomously for proper development of the excretory canals and for the long-range anterior-posterior migrations of embryonic neurons CAN, ALM and HSN. Plays a role, probably downstream of ced-10/rac1, in orientating axonal growth of HSN and AVM neurons in response to guidance cues such as slt-1. May regulate growth cone polarization by promoting asymmetric F-actin assembly. May be involved in signal transduction during cell migration. The polypeptide is Abnormal cell migration protein 10 (Caenorhabditis elegans).